Reading from the N-terminus, the 352-residue chain is MEHHHLLLQLSPPPPPPPLPAAHLMMSPSFFDAGVFADVGGDWMEDLMHLGELFGVGVGGDDDDNGGVDGGVGGGDDRMQEWQNNCEGAGSPDHQPSCGDGDGDGDGDVSPRDGELGDGDGDNSATRKRRDRSKTIVSERKRRVRMKEKLYELRALVPNITKMDKASIIADAVVYVKDLQAHARKLKEEVAALEEARPIRPPPPSAAAQRPQRQPRRVAAAAAQLARAADAAAVTTAAAAPHGARVAHVGAAQVGEGRFFVTVECEPAAAAARGGGGGVAAPVCAAVESLSCFTVESSTVGCSPDRVVATLTLKVSEAEEDVSAISECTVKLWVMAALLKEGFRPQPTVQIS.

The tract at residues 59-141 (GGDDDDNGGV…RSKTIVSERK (83 aa)) is disordered. The tract at residues 130-143 (RDRSKTIVSERKRR) is basic motif. One can recognise a bHLH domain in the interval 130–179 (RDRSKTIVSERKRRVRMKEKLYELRALVPNITKMDKASIIADAVVYVKDL). A helix-loop-helix motif region spans residues 144–179 (VRMKEKLYELRALVPNITKMDKASIIADAVVYVKDL). A disordered region spans residues 194-216 (EEARPIRPPPPSAAAQRPQRQPR). The segment covering 206–216 (AAAQRPQRQPR) has biased composition (low complexity).

It belongs to the bHLH protein family. Forms homodimers. Interacts with IRO2 in the nucleus. Expressed in the meristematic zone of lateral and primary roots.

The protein resides in the nucleus. Transcription factor involved in positive regulation of genes involved in strategy II iron acquisition, including genes for mugineic acid (MA) family phytosiderophores biosynthesis, and genes involved in S-adenosylmethionine cycle and iron transport. May play a role in the regulation of iron deficiency response by promoting the nuclear localization of IRO2. Possesses transactivation activity in yeast. The chain is Transcription factor BHLH156 from Oryza sativa subsp. japonica (Rice).